Consider the following 581-residue polypeptide: NADH-quinone oxidoreductase subunit C/D (581 aa).

Residues 1 to 172 (MSGAELISDL…PPFVMTAARF (172 aa)) form an NADH dehydrogenase I subunit C region. An NADH dehydrogenase I subunit D region spans residues 196-581 (ELMILNYGPH…IDYVMSDVDR (386 aa)).

In the N-terminal section; belongs to the complex I 30 kDa subunit family. The protein in the C-terminal section; belongs to the complex I 49 kDa subunit family. NDH-1 is composed of 13 different subunits. Subunits NuoB, CD, E, F, and G constitute the peripheral sector of the complex.

Its subcellular location is the cell inner membrane. It carries out the reaction a quinone + NADH + 5 H(+)(in) = a quinol + NAD(+) + 4 H(+)(out). Its function is as follows. NDH-1 shuttles electrons from NADH, via FMN and iron-sulfur (Fe-S) centers, to quinones in the respiratory chain. The immediate electron acceptor for the enzyme in this species is believed to be ubiquinone. Couples the redox reaction to proton translocation (for every two electrons transferred, four hydrogen ions are translocated across the cytoplasmic membrane), and thus conserves the redox energy in a proton gradient. This is NADH-quinone oxidoreductase subunit C/D from Rhodopseudomonas palustris (strain BisA53).